Reading from the N-terminus, the 192-residue chain is Lipid A acyltransferase PagP (192 aa).

The signal sequence occupies residues 1–26 (MTVVNKSFLTILIFFCQILFPLNASA). Catalysis depends on residues H64, D107, and S108.

Belongs to the lipid A palmitoyltransferase family. As to quaternary structure, homodimer.

It is found in the cell outer membrane. It carries out the reaction a lipid A + a 1,2-diacyl-sn-glycero-3-phosphocholine = a hepta-acyl lipid A + a 2-acyl-sn-glycero-3-phosphocholine. The enzyme catalyses a lipid IVA + a 1,2-diacyl-sn-glycero-3-phosphocholine = a lipid IVB + a 2-acyl-sn-glycero-3-phosphocholine. The catalysed reaction is a lipid IIA + a 1,2-diacyl-sn-glycero-3-phosphocholine = a lipid IIB + a 2-acyl-sn-glycero-3-phosphocholine. In terms of biological role, transfers a fatty acid residue from the sn-1 position of a phospholipid to the N-linked hydroxyfatty acid chain on the proximal unit of lipid A or its precursors. The protein is Lipid A acyltransferase PagP of Cronobacter sakazakii (strain ATCC BAA-894) (Enterobacter sakazakii).